Here is a 450-residue protein sequence, read N- to C-terminus: MRRMRFSPRSSFARTLLLIVTLLFVSLVTTYLVVLNFAILPSLQQFNKVLAYEVRMLMTDKLQLEDGTQLVVPPAFRREIYRELGISLYTNEAAEEAGLRWAQHYEFLSHQMAQQLGGPTEVRVEVNKSSPVVWLKTWLSPNIWVRVPLTEIHQGDFSPLFRYTLAIMLLAIGGAWLFIRIQNRPLVDLEHAALQVGKGIIPPPLREYGASEVRSVTRAFNHMAAGVKQLADDRTLLMAGVSHDLRTPLTRIRLATEMMGEEDGYLAESINKDIEECNAIIEQFIDYLRTGQEMPMEMADLNSVLGEVIAAESGYEREINTALQAGSIQVKMHPLSIKRAVANMVVNAARYGNGWIKVSSGTESHRAWFQVEDDGPGIKPEQRKHLFQPFVRGDSARSTSGTGLGLAIVQRIIDNHNGMLEIGTSERGGLSIRAWLPVPVARVQGTTKEA.

Transmembrane regions (helical) follow at residues 15–35 (TLLL…LVVL) and 159–179 (PLFR…WLFI). In terms of domain architecture, HAMP spans 180–232 (RIQNRPLVDLEHAALQVGKGIIPPPLREYGASEVRSVTRAFNHMAAGVKQLAD). The cytoplasmic dimerization domain (CDD), when dimerized forms osmosensitive core stretch occupies residues 223–289 (MAAGVKQLAD…IIEQFIDYLR (67 aa)). Residues 240 to 440 (GVSHDLRTPL…SIRAWLPVPV (201 aa)) form the Histidine kinase domain. Residues histidine 243, 347-351 (NAARY), aspartate 373, 392-393 (RG), and 402-406 (TGLGL) each bind ATP. Position 243 is a phosphohistidine; by autocatalysis (histidine 243).

In terms of assembly, homodimer. Post-translationally, autophosphorylated.

It localises to the cell inner membrane. It carries out the reaction ATP + protein L-histidine = ADP + protein N-phospho-L-histidine.. Member of the two-component regulatory system EnvZ/OmpR involved in osmoregulation (particularly of genes ompF and ompC) as well as other genes. EnvZ functions as a membrane-associated protein kinase that phosphorylates OmpR in response to environmental signals; at low osmolarity OmpR activates ompF transcription, while at high osmolarity it represses ompF and activates ompC transcription. This Salmonella typhimurium (strain SL1344) protein is Sensor histidine kinase EnvZ (envZ).